A 424-amino-acid polypeptide reads, in one-letter code: Inhibin beta A chain (424 aa).

The N-terminal stretch at 1–20 (MPLLWKRGFLLVICWIIVRS) is a signal peptide. Residues 21-308 (SPTPGSEGHS…EDRQHRRRER (288 aa)) constitute a propeptide that is removed on maturation. A glycan (N-linked (GlcNAc...) asparagine) is linked at N165. Disordered stretches follow at residues 178–200 (QQRQPKGNSEAAEDMEDMGLKGE) and 260–288 (KKKKEDDGEGKEKDGGELTGEEEKEQSHR). The segment covering 263 to 275 (KEDDGEGKEKDGG) has biased composition (basic and acidic residues). Cystine bridges form between C312–C320, C319–C389, C348–C421, and C352–C423.

This sequence belongs to the TGF-beta family. Dimeric, linked by one or more disulfide bonds. Inhibin A is a dimer of alpha and beta-A. Inhibin B is a dimer of alpha and beta-B. Activin A is a homodimer of beta-A. Activin B is a homodimer of beta-B. Activin AB is a dimer of beta-A and beta-B. In terms of tissue distribution, ciliary ganglion neurons. Levels are higher in the choroid than the iris.

It is found in the secreted. Its function is as follows. Inhibins and activins inhibit and activate, respectively, the secretion of follitropin by the pituitary gland. Inhibins/activins are involved in regulating a number of diverse functions such as hypothalamic and pituitary hormone secretion, gonadal hormone secretion, germ cell development and maturation, erythroid differentiation, insulin secretion, nerve cell survival, embryonic axial development or bone growth, depending on their subunit composition. Inhibins appear to oppose the functions of activins. Induces somatostatin in the ciliary ganglion neurons and may play a role in regulating neurotransmitter phenotype. The protein is Inhibin beta A chain (INHBA) of Gallus gallus (Chicken).